We begin with the raw amino-acid sequence, 498 residues long: Cytochrome P450 monooxygenase apdB (498 aa).

A helical transmembrane segment spans residues 20–40 (ASPQVFKLFVLILFVLLVLKI). Residue Cys-457 participates in heme binding.

Belongs to the cytochrome P450 family. Heme is required as a cofactor.

The protein localises to the membrane. The protein operates within secondary metabolite biosynthesis. Its function is as follows. Cytochrome P450 monooxygenase; part of the gene cluster that mediates the biosynthesis of aspyridones. The polyketide-amino acid backbone preaspyridone A is first assembled by the PKS-NRPS hybrid apdA. The assembly of preaspyridone A is initiated by loading of malonyl-CoA onto apdA, followed by decarboxylation to yield the acetyl starter unit. The growing polyketide chain then elongates into a tetraketide. The adpA PKS module catalyzes three Claisen condensations, as well as beta-keto processing and methylation. Alpha-methylation step during polyketide synthesis is a prerequisite and a key checkpoint for chain transfer between PKS and NRPS modules. The downstream NRPS module contains the condensation (C), adenylation (A), and thiolation (T) domains and catalyzes the incorporation of tyrosine via the formation of the L-tyrosinyl-thioester and the amide linkage between L-tyrosinyl-thioester and the tetraketide. The bimodular assembly line is terminated with a reductase (R) domain that facilitates formation and release of the tetramic acid product. Because apdA lacks a designated enoylreductase (ER) domain, the required activity is provided the enoyl reductase apdC. ApdC appears to operate with different stereoselectivity in different PKS cycle. Combined with apdC, apdA is proposed to synthesize preaspyridone A via about 20 enzymatic steps. A number of oxidative steps performed successively by the cytochrome P450 monooxygenases apdE and apdB are required for the conversion of preaspyridone A to aspyridone A. The cytochrome P450 monooxygenase apdE is responsible for the oxidative dephenylation of preaspyridone A. Finally, the predicted FAD-dependent monooxygenase apdD and the acyl-CoA dehydrogenase apdG may be involved in the transformation of aspyridone A into aspyridone B. In Emericella nidulans (strain FGSC A4 / ATCC 38163 / CBS 112.46 / NRRL 194 / M139) (Aspergillus nidulans), this protein is Cytochrome P450 monooxygenase apdB.